The primary structure comprises 505 residues: MMLDLTNAKRIGIIGGGIVGWLAAIALRRVFDVDVDVTVIEAPTVFPLGPGEGGSLNLIDTLCRNELDLDVFIGEAGATHKLGVLYENWRGGGIPDRYYRMFGGSGIPEIECRVGGFFPLLSARIAAGENLHTCIPGFELITKKASQVEIDELLATGESGLYPSFHFNHAGFERYLRRVGLARGITSRRAVVHGMRLDDRGHVNAFQLGGEELEVDFAVDASGFARLGLGKVFNTRWCSFANVLPTDRAIIFELEPRGSSPVTRATAMKAGWMWEAPLNRSISAGYAFSSRYADAAMAIAEVENHYGFRVEAKHELSLDQGYFSTAWVNNFVALGTASGFVEPLEAALAAHTFEALRNLERILANGSGIVPARAIEGYNSANARCWTGVRDFLRLHYDSKRIDTPFWRDLAAAELPEGYANLRACFQKRTPRFIDIQPYVGSGWQSLFHEIDWISVAVPLGVVPQAAACAELRRLSTESRSEVQAYVDRLKGTIAKISSTRGYMH.

Residues 11–27 (IGIIGGGIVGWLAAIAL) traverse the membrane as a helical segment.

It localises to the membrane. This is an uncharacterized protein from Sinorhizobium fredii (strain NBRC 101917 / NGR234).